We begin with the raw amino-acid sequence, 180 residues long: ATP-dependent protease subunit HslV (180 aa).

Thr6 is a catalytic residue. Residues Ala164, Cys167, and Thr170 each contribute to the Na(+) site.

This sequence belongs to the peptidase T1B family. HslV subfamily. In terms of assembly, a double ring-shaped homohexamer of HslV is capped on each side by a ring-shaped HslU homohexamer. The assembly of the HslU/HslV complex is dependent on binding of ATP.

The protein localises to the cytoplasm. The catalysed reaction is ATP-dependent cleavage of peptide bonds with broad specificity.. Allosterically activated by HslU binding. Its function is as follows. Protease subunit of a proteasome-like degradation complex believed to be a general protein degrading machinery. This is ATP-dependent protease subunit HslV from Borrelia hermsii (strain HS1 / DAH).